The following is a 628-amino-acid chain: Junctophilin-4 (628 aa).

At 1 to 606 (MSPGGKFDFD…RPAQPGAANP (606 aa)) the chain is on the cytoplasmic side. MORN repeat units follow at residues 50 to 72 (LGVFTGPGGHSYQGHWQQGKREG), 74 to 95 (GVERKSRWTYRGEWLGGLKGRS), 96 to 117 (GVWESVSGLRYAGLWKDGFQDG), 118 to 140 (YGTETYSDGGTYQGQWQAGKRHG), 141 to 163 (YGVRQSVPYHQAALLRSPRRTSL), and 164 to 186 (DSGHSDPPTPPPPLPLPGDEGGS). 2 disordered regions span residues 158 to 214 (PRRT…RTPA) and 231 to 276 (GGRR…LIEG). Residues 170–179 (PPTPPPPLPL) show a composition bias toward pro residues. 2 stretches are compositionally biased toward low complexity: residues 231–241 (GGRRSSLGSKR) and 253–272 (GSTGPPGSEASGPPAAAPPA). MORN repeat units follow at residues 317-339 (YGRTTRPDGSREEGKYKRNRLVH) and 340-362 (GGRVRSLLPLALRRGKVKEKVDR). The interval 415 to 602 (DLQPMLEAPG…AATERPAQPG (188 aa)) is disordered. The span at 432-443 (EGSDTEPLDEDS) shows a compositional bias: acidic residues. Low complexity-rich tracts occupy residues 453–467 (PSEGSPELPSSPASS) and 528–541 (GSPLLGGCSDSSGS). The chain crosses the membrane as a helical; Anchor for type IV membrane protein span at residues 607–628 (LVVGAVALLDLSLAFLFSQLLT).

Belongs to the junctophilin family.

The protein localises to the cell membrane. It localises to the endoplasmic reticulum membrane. Functionally, junctophilins contribute to the formation of junctional membrane complexes (JMCs) which link the plasma membrane with the endoplasmic or sarcoplasmic reticulum in excitable cells. Provides a structural foundation for functional cross-talk between the cell surface and intracellular calcium release channels. JPH4 is brain-specific and appears to have an active role in certain neurons involved in motor coordination and memory. The polypeptide is Junctophilin-4 (JPH4) (Homo sapiens (Human)).